Here is a 526-residue protein sequence, read N- to C-terminus: Trigger factor (526 aa).

Positions 162–243 (GDFVSIDLSA…LGSVKERELP (82 aa)) constitute a PPIase FKBP-type domain. Over residues 425–460 (DTDGADVDPKEYFGDVEAEGDKADKAETDKAEEKPK) the composition is skewed to basic and acidic residues. The tract at residues 425-526 (DTDGADVDPK…AKKAAEKKED (102 aa)) is disordered. Positions 461-517 (KAPAKKSTTKKSTAKKSTAKKSTAKKSTAKKSTAKKSTTKKATKSTAKKSTAKKTTA) are enriched in basic residues.

Belongs to the FKBP-type PPIase family. Tig subfamily.

The protein resides in the cytoplasm. The enzyme catalyses [protein]-peptidylproline (omega=180) = [protein]-peptidylproline (omega=0). Its function is as follows. Involved in protein export. Acts as a chaperone by maintaining the newly synthesized protein in an open conformation. Functions as a peptidyl-prolyl cis-trans isomerase. This chain is Trigger factor, found in Corynebacterium jeikeium (strain K411).